A 222-amino-acid chain; its full sequence is Phosphoribosylformylglycinamidine synthase subunit PurQ (222 aa).

The region spanning 2 to 222 (RTAVIQFPGS…FESLKGALVQ (221 aa)) is the Glutamine amidotransferase type-1 domain. Cysteine 87 (nucleophile) is an active-site residue. Residues histidine 195 and glutamate 197 contribute to the active site.

Part of the FGAM synthase complex composed of 1 PurL, 1 PurQ and 2 PurS subunits.

The protein localises to the cytoplasm. It catalyses the reaction N(2)-formyl-N(1)-(5-phospho-beta-D-ribosyl)glycinamide + L-glutamine + ATP + H2O = 2-formamido-N(1)-(5-O-phospho-beta-D-ribosyl)acetamidine + L-glutamate + ADP + phosphate + H(+). The catalysed reaction is L-glutamine + H2O = L-glutamate + NH4(+). The protein operates within purine metabolism; IMP biosynthesis via de novo pathway; 5-amino-1-(5-phospho-D-ribosyl)imidazole from N(2)-formyl-N(1)-(5-phospho-D-ribosyl)glycinamide: step 1/2. In terms of biological role, part of the phosphoribosylformylglycinamidine synthase complex involved in the purines biosynthetic pathway. Catalyzes the ATP-dependent conversion of formylglycinamide ribonucleotide (FGAR) and glutamine to yield formylglycinamidine ribonucleotide (FGAM) and glutamate. The FGAM synthase complex is composed of three subunits. PurQ produces an ammonia molecule by converting glutamine to glutamate. PurL transfers the ammonia molecule to FGAR to form FGAM in an ATP-dependent manner. PurS interacts with PurQ and PurL and is thought to assist in the transfer of the ammonia molecule from PurQ to PurL. This chain is Phosphoribosylformylglycinamidine synthase subunit PurQ, found in Deinococcus geothermalis (strain DSM 11300 / CIP 105573 / AG-3a).